The sequence spans 200 residues: Late embryogenesis abundant protein 19 (200 aa).

Disordered regions lie at residues 1-158 (MASH…KSTV) and 172-200 (TEDK…ARDH). Composition is skewed to basic and acidic residues over residues 13-23 (GETKAHTEEKA), 30-42 (SKDK…DRAS), 53-81 (QDTK…KDKT), 88-97 (ARDKAAESKD), and 105-114 (EKTEQAKQKA). Positions 52-81 (GQDTKEATKEKAQAAKERASETAQAAKDKT) form a coiled coil. Low complexity predominate over residues 115–130 (AETAGAAKQKTAETAQ). Residues 145-156 (SVLQQASEQVKS) are compositionally biased toward polar residues. Positions 172–183 (TEDKAGTDDGAN) are enriched in basic and acidic residues. The span at 186-200 (TSATAAATETTARDH) shows a compositional bias: low complexity.

It belongs to the LEA type 4 family. Expressed in the shoot apex and leaves.

In terms of biological role, involved in response to drought stress. This Oryza sativa subsp. indica (Rice) protein is Late embryogenesis abundant protein 19.